The following is a 575-amino-acid chain: Hemagglutinin-neuraminidase (575 aa).

A compositionally biased stretch (basic and acidic residues) spans 1–10; the sequence is MDGDRGKRDS. Positions 1 to 24 are disordered; sequence MDGDRGKRDSYWSTSPSGSTTKLA. At 1 to 37 the chain is on the intravirion side; sequence MDGDRGKRDSYWSTSPSGSTTKLASGWERSSKVDTWL. The interval 10–14 is incorporation in virion; that stretch reads SYWST. The segment covering 11-23 has biased composition (polar residues); sequence YWSTSPSGSTTKL. The chain crosses the membrane as a helical span at residues 38–58; that stretch reads LILSFTQWALSIATVIICIII. The tract at residues 59-140 is involved in interaction with F protein; that stretch reads SARQGYSMKE…RQELTQLCES (82 aa). Over 59–575 the chain is Virion surface; sequence SARQGYSMKE…SIPKLCKAES (517 aa). An N-linked (GlcNAc...) asparagine; by host glycan is attached at asparagine 77. 4 cysteine pairs are disulfide-bonded: cysteine 192-cysteine 216, cysteine 258-cysteine 271, cysteine 357-cysteine 469, and cysteine 463-cysteine 473. The segment at 254–259 is involved in neuraminidase activity; sequence NRKSCS. Residues asparagine 499 and asparagine 511 are each glycosylated (N-linked (GlcNAc...) asparagine; by host). A disulfide bridge connects residues cysteine 535 and cysteine 544.

This sequence belongs to the paramyxoviruses hemagglutinin-neuraminidase family. In terms of assembly, homotetramer; composed of disulfide-linked homodimers. Interacts with F protein trimer. In terms of processing, N-glycosylated; glycans consist of a mixture of high mannose-type oligosaccharides and of complex-type oligosaccharides.

It is found in the virion membrane. Its subcellular location is the host cell membrane. It catalyses the reaction Hydrolysis of alpha-(2-&gt;3)-, alpha-(2-&gt;6)-, alpha-(2-&gt;8)- glycosidic linkages of terminal sialic acid residues in oligosaccharides, glycoproteins, glycolipids, colominic acid and synthetic substrates.. Attaches the virus to sialic acid-containing cell receptors and thereby initiating infection. Binding of HN protein to the receptor induces a conformational change that allows the F protein to trigger virion/cell membranes fusion. Functionally, neuraminidase activity ensures the efficient spread of the virus by dissociating the mature virions from the neuraminic acid containing glycoproteins. The chain is Hemagglutinin-neuraminidase (HN) from Sendai virus (strain Fushimi) (SeV).